The following is a 141-amino-acid chain: NADH dehydrogenase [ubiquinone] 1 alpha subcomplex subunit 11 (141 aa).

The next 2 helical transmembrane spans lie at 21–43 (KTYI…RVSL) and 58–80 (RYTF…SAQV).

It belongs to the complex I NDUFA11 subunit family. As to quaternary structure, complex I is composed of 45 different subunits.

Its subcellular location is the mitochondrion inner membrane. Functionally, accessory subunit of the mitochondrial membrane respiratory chain NADH dehydrogenase (Complex I), that is believed not to be involved in catalysis. Complex I functions in the transfer of electrons from NADH to the respiratory chain. The immediate electron acceptor for the enzyme is believed to be ubiquinone. This chain is NADH dehydrogenase [ubiquinone] 1 alpha subcomplex subunit 11 (Ndufa11), found in Mus musculus (Mouse).